Consider the following 92-residue polypeptide: Small ribosomal subunit protein uS19 (92 aa).

It belongs to the universal ribosomal protein uS19 family.

Functionally, protein S19 forms a complex with S13 that binds strongly to the 16S ribosomal RNA. In Nitrobacter winogradskyi (strain ATCC 25391 / DSM 10237 / CIP 104748 / NCIMB 11846 / Nb-255), this protein is Small ribosomal subunit protein uS19.